The primary structure comprises 662 residues: DNA ligase (662 aa).

Residues 31 to 35, 80 to 81, and Glu109 each bind NAD(+); these read DYEYD and SL. The active-site N6-AMP-lysine intermediate is the Lys111. NAD(+) is bound by residues Arg132, Glu166, Lys282, and Lys306. Residues Cys400, Cys403, Cys418, and Cys423 each contribute to the Zn(2+) site. The region spanning 581-662 is the BRCT domain; it reads KVSNIFEGKT…FEEMLKGENI (82 aa).

Belongs to the NAD-dependent DNA ligase family. LigA subfamily. Mg(2+) serves as cofactor. Requires Mn(2+) as cofactor.

The enzyme catalyses NAD(+) + (deoxyribonucleotide)n-3'-hydroxyl + 5'-phospho-(deoxyribonucleotide)m = (deoxyribonucleotide)n+m + AMP + beta-nicotinamide D-nucleotide.. DNA ligase that catalyzes the formation of phosphodiester linkages between 5'-phosphoryl and 3'-hydroxyl groups in double-stranded DNA using NAD as a coenzyme and as the energy source for the reaction. It is essential for DNA replication and repair of damaged DNA. In Thermoanaerobacter sp. (strain X514), this protein is DNA ligase.